The following is a 152-amino-acid chain: Transcriptional repressor NrdR (152 aa).

A zinc finger spans residues 3–34 (CPYCQHPDSDVIDTRKLHNGETIRRRRKCEAC). Residues 49–139 (ITVVKKNGER…VYRSFADIGK (91 aa)) enclose the ATP-cone domain.

The protein belongs to the NrdR family. It depends on Zn(2+) as a cofactor.

In terms of biological role, negatively regulates transcription of bacterial ribonucleotide reductase nrd genes and operons by binding to NrdR-boxes. This Roseiflexus castenholzii (strain DSM 13941 / HLO8) protein is Transcriptional repressor NrdR.